Here is a 528-residue protein sequence, read N- to C-terminus: GMP synthase [glutamine-hydrolyzing] (528 aa).

A Glutamine amidotransferase type-1 domain is found at 13–204 (AIVILDFGSQ…VYHICGCEPD (192 aa)). The Nucleophile role is filled by Cys-90. Residues His-178 and Glu-180 contribute to the active site. Residues 205–403 (WTTSAFIDEA…LGLPEEIVRR (199 aa)) form the GMPS ATP-PPase domain. 232–238 (SGGVDSS) serves as a coordination point for ATP.

As to quaternary structure, homodimer.

It catalyses the reaction XMP + L-glutamine + ATP + H2O = GMP + L-glutamate + AMP + diphosphate + 2 H(+). It functions in the pathway purine metabolism; GMP biosynthesis; GMP from XMP (L-Gln route): step 1/1. Its function is as follows. Catalyzes the synthesis of GMP from XMP. In Parasynechococcus marenigrum (strain WH8102), this protein is GMP synthase [glutamine-hydrolyzing].